Consider the following 438-residue polypeptide: UDP-N-acetylmuramate--L-alanine ligase (438 aa).

108–114 contacts ATP; the sequence is GAHGKTS.

It belongs to the MurCDEF family.

It is found in the cytoplasm. The enzyme catalyses UDP-N-acetyl-alpha-D-muramate + L-alanine + ATP = UDP-N-acetyl-alpha-D-muramoyl-L-alanine + ADP + phosphate + H(+). Its pathway is cell wall biogenesis; peptidoglycan biosynthesis. Functionally, cell wall formation. In Oceanobacillus iheyensis (strain DSM 14371 / CIP 107618 / JCM 11309 / KCTC 3954 / HTE831), this protein is UDP-N-acetylmuramate--L-alanine ligase.